Reading from the N-terminus, the 180-residue chain is Translation initiation factor IF-3 (180 aa).

It belongs to the IF-3 family. Monomer.

It localises to the cytoplasm. Its function is as follows. IF-3 binds to the 30S ribosomal subunit and shifts the equilibrium between 70S ribosomes and their 50S and 30S subunits in favor of the free subunits, thus enhancing the availability of 30S subunits on which protein synthesis initiation begins. This chain is Translation initiation factor IF-3, found in Caldanaerobacter subterraneus subsp. tengcongensis (strain DSM 15242 / JCM 11007 / NBRC 100824 / MB4) (Thermoanaerobacter tengcongensis).